The following is a 724-amino-acid chain: Protein arginine N-methyltransferase 1.6 (724 aa).

2 consecutive SAM-dependent MTase PRMT-type domains span residues 61 to 388 and 395 to 721; these read NDQP…YNLK and HERT…IVTH. Catalysis depends on residues glutamate 183 and glutamate 192.

It belongs to the class I-like SAM-binding methyltransferase superfamily. Protein arginine N-methyltransferase family. PRMT7 subfamily.

Arginine methyltransferase that can both catalyze the formation of omega-N monomethylarginine (MMA) and symmetrical dimethylarginine (sDMA). This Arabidopsis thaliana (Mouse-ear cress) protein is Protein arginine N-methyltransferase 1.6 (PRMT16).